The following is a 223-amino-acid chain: MPGCRISACGPGAQEGTAEPGSPPPPPREPLPSLQPPSPSPTSTPTPTKSPPLPEAAETPVEGQELQRWRQGASGGSGGAGPAGIAGAAAGAGGRALELAEARRRLLEVEGRRRLVSELESRVLQLHRVFLAAELRLAHRAESLSRLSGGVAQAELYLAAHGSRLKKGARRGRRGRPPALLASALGLGSCVPWGAGRLRRGQGPEPDSPFRRSPPRGPASPQR.

2 disordered regions span residues 1 to 84 and 196 to 223; these read MPGC…GPAG and GRLRRGQGPEPDSPFRRSPPRGPASPQR. Over residues 21-54 the composition is skewed to pro residues; the sequence is GSPPPPPREPLPSLQPPSPSPTSTPTPTKSPPLP. The segment covering 73-84 has biased composition (gly residues); it reads ASGGSGGAGPAG.

Interacts with TMF1; may regulate TRNP1 proteasomal degradation. Ubiquitinated, leading to its degradation by the proteasome. In terms of tissue distribution, expressed in brain and kidney (at protein level). Also detected in spleen and intestine.

Its subcellular location is the nucleus. DNA-binding factor that regulates the expression of a subset of genes and plays a key role in tangential, radial, and lateral expansion of the brain neocortex. Regulates neural stem cells proliferation and the production of intermediate neural progenitors and basal radial glial cells affecting the process of cerebral cortex gyrification. May control the proliferation rate of cells by regulating their progression through key cell-cycle transition points. The protein is TMF-regulated nuclear protein 1 (Trnp1) of Mus musculus (Mouse).